An 85-amino-acid chain; its full sequence is MFQNQVKITAPHGLHTRPAAQFVKEAKKFTSEISIIYNGKSVNAKSLFKIQTLGLIQGSLITLSAEGEDEKKAIEHLSLIMTELE.

The HPr domain occupies 1–85 (MFQNQVKITA…HLSLIMTELE (85 aa)). Residue H15 is the Pros-phosphohistidine intermediate of the active site.

The protein belongs to the HPr family.

The protein resides in the cytoplasm. In terms of biological role, general (non sugar-specific) component of the phosphoenolpyruvate-dependent sugar phosphotransferase system (sugar PTS). This major carbohydrate active-transport system catalyzes the phosphorylation of incoming sugar substrates concomitantly with their translocation across the cell membrane. The phosphoryl group from phosphoenolpyruvate (PEP) is transferred to the phosphoryl carrier protein HPr by enzyme I. Phospho-HPr then transfers it to the PTS EIIA domain. The polypeptide is Phosphocarrier protein HPr (ptsH) (Buchnera aphidicola subsp. Acyrthosiphon pisum (strain APS) (Acyrthosiphon pisum symbiotic bacterium)).